The chain runs to 227 residues: Staphylococcal superantigen-like 10 (227 aa).

The signal sequence occupies residues 1-30 (MKFTALAKATLALGILTTGTLTTEVHSGHA).

The protein belongs to the staphylococcal/streptococcal toxin family. As to quaternary structure, interacts with prothrombin/F2 and coagulation factor X/F12. Interacts with human CXCR4.

The protein resides in the secreted. Functionally, plays a role in the inhibition of host complement activation via the classical pathway by interacting with the Fc region of human IgG and thereby interfering with the IgG/C1q interaction. Also inhibits the penultimate step of plasma clotting by interacting with prothrombin/F2 and coagulation factor X/F12. Does not affect the protease activity of thrombin but interferes with the conversion of prothrombin to thrombin. Interacts with human receptor CXCR4 and specifically inhibits CXCL12-induced calcium mobilization and cell migration. The chain is Staphylococcal superantigen-like 10 from Staphylococcus aureus (strain NCTC 8325 / PS 47).